The primary structure comprises 330 residues: Ketol-acid reductoisomerase (NADP(+)) (330 aa).

Residues 2–182 (VETFYEKDAD…GCTRAGVIKT (181 aa)) enclose the KARI N-terminal Rossmann domain. NADP(+) contacts are provided by residues 25–28 (YGSQ), K48, S51, S53, and 83–86 (DEVQ). The active site involves H108. An NADP(+)-binding site is contributed by G134. The region spanning 183-328 (TFKEETETDL…EKLRAMMPWI (146 aa)) is the KARI C-terminal knotted domain. Residues D191, E195, E227, and E231 each coordinate Mg(2+). S252 provides a ligand contact to substrate.

This sequence belongs to the ketol-acid reductoisomerase family. It depends on Mg(2+) as a cofactor.

The enzyme catalyses (2R)-2,3-dihydroxy-3-methylbutanoate + NADP(+) = (2S)-2-acetolactate + NADPH + H(+). It catalyses the reaction (2R,3R)-2,3-dihydroxy-3-methylpentanoate + NADP(+) = (S)-2-ethyl-2-hydroxy-3-oxobutanoate + NADPH + H(+). It participates in amino-acid biosynthesis; L-isoleucine biosynthesis; L-isoleucine from 2-oxobutanoate: step 2/4. Its pathway is amino-acid biosynthesis; L-valine biosynthesis; L-valine from pyruvate: step 2/4. In terms of biological role, involved in the biosynthesis of branched-chain amino acids (BCAA). Catalyzes an alkyl-migration followed by a ketol-acid reduction of (S)-2-acetolactate (S2AL) to yield (R)-2,3-dihydroxy-isovalerate. In the isomerase reaction, S2AL is rearranged via a Mg-dependent methyl migration to produce 3-hydroxy-3-methyl-2-ketobutyrate (HMKB). In the reductase reaction, this 2-ketoacid undergoes a metal-dependent reduction by NADPH to yield (R)-2,3-dihydroxy-isovalerate. This chain is Ketol-acid reductoisomerase (NADP(+)), found in Petrotoga mobilis (strain DSM 10674 / SJ95).